The primary structure comprises 243 residues: Probable transcriptional regulatory protein BAV2207 (243 aa).

Positions Met1–Arg21 are disordered.

Belongs to the TACO1 family.

The protein localises to the cytoplasm. The polypeptide is Probable transcriptional regulatory protein BAV2207 (Bordetella avium (strain 197N)).